The sequence spans 967 residues: E3 ubiquitin-protein ligase arkadia-C (967 aa).

Disordered regions lie at residues 57–175 and 193–276; these read QQID…VSSL and RKRF…SGGM. The segment covering 112–131 has biased composition (low complexity); that stretch reads SSFSDCISSPSSSSHFGDSD. A compositionally biased stretch (polar residues) spans 149 to 160; the sequence is GINSTPRTQSAR. Residues 232-251 are compositionally biased toward low complexity; that stretch reads SSSSSSENDLSSESSSSSST. Residues 280–284 carry the SUMO interaction motif 1 (SIM) motif; it reads VVVIE. The SUMO interaction motif 2 (SIM) signature appears at 305–311; the sequence is EVEIVTV. The disordered stretch occupies residues 321–343; sequence LGHPRSHWGQNSQSGRTQEHRTR. Positions 360 to 364 match the SUMO interaction motif 3 (SIM) motif; the sequence is VVDLT. Disordered stretches follow at residues 368 to 452, 482 to 548, 629 to 657, and 669 to 689; these read DDPT…MPRL, HSHH…LSNN, LHHQ…MDYV, and PSLT…LSTA. Residues 385–395 show a composition bias toward low complexity; the sequence is VSTVSSNTSTS. The segment covering 482-498 has biased composition (basic residues); it reads HSHHFPHHHHHHHHHSS. Residues 629-642 show a composition bias toward polar residues; it reads LHHQTSACPHSNPA. Pro residues predominate over residues 643-654; the sequence is SQPPPPPPPPPM. The interval 880 to 882 is ubiquitin binding; sequence YPH. Cys-915 and Cys-918 together coordinate Zn(2+). The segment at 915–956 adopts an RING-type; atypical zinc-finger fold; the sequence is CTICLSILEEGEDVRRLPCMHLFHQVCVDQWLITNKKCPICR. The segment at 930 to 934 is ubiquitin binding; it reads RLPCM. Zn(2+) is bound by residues His-938 and Cys-941.

This sequence belongs to the Arkadia family. As to quaternary structure, monomer.

It is found in the nucleus. The protein localises to the cytoplasm. It localises to the PML body. It catalyses the reaction S-ubiquitinyl-[E2 ubiquitin-conjugating enzyme]-L-cysteine + [acceptor protein]-L-lysine = [E2 ubiquitin-conjugating enzyme]-L-cysteine + N(6)-ubiquitinyl-[acceptor protein]-L-lysine.. Its pathway is protein modification; protein ubiquitination. Its activity is regulated as follows. Binds free ubiquitin non-covalently via its RING-type zinc finger. Ubiquitin-binding leads to enhance the E3 ubiquitin-protein ligase activity by stabilizing the ubiquitin-conjugating enzyme E2 (donor ubiquitin) in the 'closed' conformation and activating ubiquitin transfer. In terms of biological role, E3 ubiquitin-protein ligase required for mesoderm patterning during embryonic development. Acts as an enhancer of the transcriptional responses of the smad2/smad3 effectors, which are activated downstream of BMP. Acts by mediating ubiquitination and degradation of SMAD inhibitors such as smad7, inducing their proteasomal degradation and thereby enhancing the transcriptional activity of TGF-beta and BMP. Specifically binds polysumoylated chains via SUMO interaction motifs (SIMs) and mediates ubiquitination of sumoylated substrates. The regulation of the BMP-SMAD signaling is however independent of sumoylation and is not dependent of SUMO interaction motifs (SIMs). This chain is E3 ubiquitin-protein ligase arkadia-C (rnf111-c), found in Xenopus laevis (African clawed frog).